The sequence spans 75 residues: Probable pilin MJ0431 (75 aa).

The propeptide occupies 1–15 (MGKMKILKKLLSKKG). A QXSXEXXXL motif is present at residues 16-24 (QLSMEVGVL).

The N-terminus is cleaved by the prepilin peptidase EppA, which recognizes the class III signal sequence.

The protein localises to the secreted. Its subcellular location is the cell surface. The protein resides in the fimbrium. This is Probable pilin MJ0431 from Methanocaldococcus jannaschii (strain ATCC 43067 / DSM 2661 / JAL-1 / JCM 10045 / NBRC 100440) (Methanococcus jannaschii).